Reading from the N-terminus, the 366-residue chain is Chorismate synthase (366 aa).

R48 and R54 together coordinate NADP(+). Residues 125 to 127 (RSS), 238 to 239 (NA), G278, 293 to 297 (KPTSS), and R319 contribute to the FMN site.

Belongs to the chorismate synthase family. As to quaternary structure, homotetramer. The cofactor is FMNH2.

The catalysed reaction is 5-O-(1-carboxyvinyl)-3-phosphoshikimate = chorismate + phosphate. It functions in the pathway metabolic intermediate biosynthesis; chorismate biosynthesis; chorismate from D-erythrose 4-phosphate and phosphoenolpyruvate: step 7/7. Its function is as follows. Catalyzes the anti-1,4-elimination of the C-3 phosphate and the C-6 proR hydrogen from 5-enolpyruvylshikimate-3-phosphate (EPSP) to yield chorismate, which is the branch point compound that serves as the starting substrate for the three terminal pathways of aromatic amino acid biosynthesis. This reaction introduces a second double bond into the aromatic ring system. In Burkholderia ambifaria (strain ATCC BAA-244 / DSM 16087 / CCUG 44356 / LMG 19182 / AMMD) (Burkholderia cepacia (strain AMMD)), this protein is Chorismate synthase.